Consider the following 121-residue polypeptide: Putative iron-sulfur cluster insertion protein ErpA (121 aa).

Iron-sulfur cluster-binding residues include Cys49, Cys113, and Cys115.

The protein belongs to the HesB/IscA family. In terms of assembly, homodimer. Iron-sulfur cluster serves as cofactor.

In terms of biological role, required for insertion of 4Fe-4S clusters. The polypeptide is Putative iron-sulfur cluster insertion protein ErpA (Verminephrobacter eiseniae (strain EF01-2)).